The primary structure comprises 293 residues: Homeobox protein ceh-24 (293 aa).

Basic and acidic residues-rich tracts occupy residues 1-15 and 22-38; these read MSEKESPSPQHKKDE and QETKDSEDDATKKMKIK. 2 disordered regions span residues 1–38 and 203–256; these read MSEKESPSPQHKKDEVVDDTEQETKDSEDDATKKMKIK and EKEK…SNGV. The homeobox DNA-binding region spans 144 to 203; the sequence is RRKRRVLFSQAQVYELERRFKQAKYLTAPEREQLANSIRLTPTQVKIWFQNHRYKCKRQE.

The protein belongs to the NK-2 homeobox family. Expressed in the 8 vulval muscles, 8-10 ventral neurons in the head and in the most posterior pharyngeal muscle cell, m8.

It localises to the nucleus. Functionally, probable transcriptional regulator that is required in neural development for the normal formation of sublateral cholinergic motor neuron processes. Plays a role in regulating the expression of acetylcholine transporter protein unc-17 in the sublateral processes. In particular, it is required in sublateral motor neurons for a left-right turning behavior that occurs during the lethargus phase of the normal sleep process called 'flipping'. During 'flipping' animals rotate 180 degrees about their longitudinal axis. In Caenorhabditis briggsae, this protein is Homeobox protein ceh-24.